We begin with the raw amino-acid sequence, 682 residues long: DNA-directed RNA polymerase subunit beta' (682 aa).

The Zn(2+) site is built by C69, C71, C87, and C90. Mg(2+) contacts are provided by D489, D491, and D493.

The protein belongs to the RNA polymerase beta' chain family. RpoC1 subfamily. In plastids the minimal PEP RNA polymerase catalytic core is composed of four subunits: alpha, beta, beta', and beta''. When a (nuclear-encoded) sigma factor is associated with the core the holoenzyme is formed, which can initiate transcription. Requires Mg(2+) as cofactor. It depends on Zn(2+) as a cofactor.

The protein localises to the plastid. Its subcellular location is the chloroplast. It catalyses the reaction RNA(n) + a ribonucleoside 5'-triphosphate = RNA(n+1) + diphosphate. In terms of biological role, DNA-dependent RNA polymerase catalyzes the transcription of DNA into RNA using the four ribonucleoside triphosphates as substrates. This is DNA-directed RNA polymerase subunit beta' from Acorus calamus var. americanus (American sweet flag).